The sequence spans 320 residues: Phospho-N-acetylmuramoyl-pentapeptide-transferase (320 aa).

10 helical membrane passes run F6–G26, M54–L74, L81–I101, L117–S137, I145–F165, I175–F195, I200–N220, I226–L246, F251–V271, and R300–F320.

This sequence belongs to the glycosyltransferase 4 family. MraY subfamily. Mg(2+) serves as cofactor.

Its subcellular location is the cell membrane. The catalysed reaction is UDP-N-acetyl-alpha-D-muramoyl-L-alanyl-gamma-D-glutamyl-L-lysyl-D-alanyl-D-alanine + di-trans,octa-cis-undecaprenyl phosphate = Mur2Ac(oyl-L-Ala-gamma-D-Glu-L-Lys-D-Ala-D-Ala)-di-trans,octa-cis-undecaprenyl diphosphate + UMP. It participates in cell wall biogenesis; peptidoglycan biosynthesis. In terms of biological role, catalyzes the initial step of the lipid cycle reactions in the biosynthesis of the cell wall peptidoglycan: transfers peptidoglycan precursor phospho-MurNAc-pentapeptide from UDP-MurNAc-pentapeptide onto the lipid carrier undecaprenyl phosphate, yielding undecaprenyl-pyrophosphoryl-MurNAc-pentapeptide, known as lipid I. This Latilactobacillus sakei subsp. sakei (strain 23K) (Lactobacillus sakei subsp. sakei) protein is Phospho-N-acetylmuramoyl-pentapeptide-transferase.